Here is a 1070-residue protein sequence, read N- to C-terminus: MAKKKKQIHLNIIDFQKYYQTDDLLLDTSISTEKKTVDNQKFIRKNRTLEKDEVVQNIDWRTFDNEKEKETNNENTSNVNKIKSPGLEKKNFKKSNDVITLGARNKNKSTNLNADDIDFTNLRNKKKEDDIDFTNLRNKKKEDDLDFSNLRNKKKEEEDVDFSNLRNKKKEDDVDFSNVRNKKKEDDLDFSNVRNKKKEDDVNFSDVRNKKKEDDLDFSNVRNKKKEDDVNFSDVRNKKKEDDLDFSNVRNKKKEDDVNFSDVRNKKKEDALDFSNVRNKKKEDDLDFSNVRNKNKEDDMDFSNVRNKKKEDDLDFSNVRNKKKEDDLDFSNVRNKKKEDDLNFSNVRNKKKEDDLDFSNVRNKNKEDDMDFSNVRNKKKEDDMDFSNVRNKKKEDDLDFSNVRNKKKEDDLDFSNVRNKKKEDDLDFSNLRNKKKEESKENDTNKSEKPLYLRRLEEYRKKKKLESQANDTAMKMHEKEQIDDIQERKEEIKEEFKEEVKEEIKEIKEEIKEVKEEIKEEIKEEIKEVKEEIKEEIKEEIKEVKEEIKEVKEEIKEVKEEIKEVKEEIKEEIKEVKEEIKEEIKEEIKEVKEEIKEEVKEEIKEVKEEIKEVKEEIKEEVKEEIKEVKEEIKEVKEEIKEEIKEVKEEIKEEVKEEIKEEIKEIKEELKNDISSETTKEEKNTEHKKEETEKKKFIPKRVIMYQQELKEKEERNLKLLEQQRKEREMRLQLIRSKTQGTSSTFIPSAKLKHLESLKEEKKKEVKTNIQPKDNNNNNNNNNNNNNNIAVLKNNKNEEQNVIKKKSIFLEIAEKTENAKIVEKTDIEEIAKKKREELYKKQLEKITKKNEEHLKYNNIYKHDVNIIKNFYNEIKDKIIQNYYFNQDDCISLCSILKTDDCNYMESHVPFYVVISIFMLSLPQKLQNDDYFKRASNIKNLLIYLKENSKIENHEDYILNDTLKFCDQLKYPHLSEETSLIETIFDTLLYSGVISKNSFIQWFQDDDSNAELKSKAMLQLIYWHKWLTEEEKDQEEEIDELDDTEEKNISDVSDIEKNVPKNFIFKKIKKKLF.

5 disordered regions span residues Glu66–Glu88, Asp355–Asn388, Glu423–Asp483, Glu667–Glu692, and Ser735–Asn786. Positions Asn73–Lys83 are enriched in low complexity. Composition is skewed to basic and acidic residues over residues Lys435–Arg460 and Met474–Asp483. Positions Lys475–Lys736 form a coiled coil. Over residues Ser735 to Ile745 the composition is skewed to polar residues. Positions Lys751–Lys765 are enriched in basic and acidic residues. The segment covering Asn773 to Asn786 has biased composition (low complexity).

This is an uncharacterized protein from Plasmodium falciparum (isolate 3D7).